A 470-amino-acid polypeptide reads, in one-letter code: Alpha-galactosidase (470 aa).

The signal sequence occupies residues 1–18 (MFSLLLLTSTALVETALG). Cys42 and Cys74 form a disulfide bridge. N-linked (GlcNAc...) asparagine glycosylation is present at Asn43. Substrate is bound by residues Asp72 and Asp73. An N-linked (GlcNAc...) asparagine glycan is attached at Asn82. Cys121 and Cys151 are disulfide-bonded. Substrate is bound at residue Lys147. The active-site Nucleophile is the Asp149. An N-linked (GlcNAc...) asparagine glycan is attached at Asn175. Arg205 contributes to the substrate binding site. The Proton donor role is filled by Asp209. 2 cysteine pairs are disulfide-bonded: Cys221–Cys237 and Cys223–Cys230. Gln251 lines the substrate pocket. 6 N-linked (GlcNAc...) asparagine glycosylation sites follow: Asn270, Asn388, Asn413, Asn422, Asn435, and Asn454.

The protein belongs to the glycosyl hydrolase 27 family. Homotetramer.

It localises to the secreted. The catalysed reaction is Hydrolysis of terminal, non-reducing alpha-D-galactose residues in alpha-D-galactosides, including galactose oligosaccharides, galactomannans and galactolipids.. This chain is Alpha-galactosidase (MEL), found in Zygotorulaspora mrakii (Zygosaccharomyces mrakii).